A 540-amino-acid polypeptide reads, in one-letter code: Decreased expression in renal and prostate cancer protein (540 aa).

A compositionally biased stretch (basic and acidic residues) spans 1 to 12; sequence MKEPRIFPRERP. 2 disordered regions span residues 1–264 and 304–389; these read MKEP…DARA and SQAS…AFSQ. Low complexity-rich tracts occupy residues 113–125 and 180–192; these read PRPG…SPGS and GPSL…LTPG. Residues 304–316 are compositionally biased toward polar residues; sequence SQASGNMGTSPSS. S313 carries the phosphoserine modification. The span at 321 to 330 shows a compositional bias: low complexity; sequence PGPIGPNSGP. Residue R375 is modified to Asymmetric dimethylarginine. The residue at position 403 (R403) is an Omega-N-methylarginine. Residue S439 is modified to Phosphoserine. Residues 516-540 form a disordered region; the sequence is GTNPAAFPRPGGPMAAMYPNGMLPP.

This sequence belongs to the DERPC family.

It is found in the nucleus. In terms of biological role, potential tumor suppressor. This is Decreased expression in renal and prostate cancer protein from Bos taurus (Bovine).